A 342-amino-acid polypeptide reads, in one-letter code: 4-hydroxy-2-oxovalerate aldolase (342 aa).

Residues 7–257 (IWITEVALRD…KTGVDLYKMM (251 aa)) enclose the Pyruvate carboxyltransferase domain. Substrate is bound at residue 15 to 16 (RD). Residue Asp16 coordinates Mn(2+). Catalysis depends on His19, which acts as the Proton acceptor. Positions 169 and 196 each coordinate substrate. 2 residues coordinate Mn(2+): His196 and His198. Substrate is bound at residue Tyr287.

Belongs to the 4-hydroxy-2-oxovalerate aldolase family.

It carries out the reaction (S)-4-hydroxy-2-oxopentanoate = acetaldehyde + pyruvate. The polypeptide is 4-hydroxy-2-oxovalerate aldolase (nbaI) (Geobacillus thermodenitrificans (strain NG80-2)).